Reading from the N-terminus, the 734-residue chain is Photosystem I P700 chlorophyll a apoprotein A2 (734 aa).

8 consecutive transmembrane segments (helical) span residues 46–69 (IFASHFGQLAVIFLWTSGNLFHVA), 135–158 (LYRGALFLLFLSTLALLAGWLHLQ), 175–199 (LNHHLSGLFGVSSLAWSGHLVHVAI), 273–291 (IAHHHLAIAILFIVAGHMY), 330–353 (LHFQLGLALASLGVITSLVAQHMY), 369–395 (AALYTHHQYIAGFIMVGAFAHGAIFFI), 417–439 (AIISHLSWASLFLGFHTLGLYVH), and 517–535 (FLVHHAIALGLHTTTLILV). [4Fe-4S] cluster is bound by residues cysteine 559 and cysteine 568. The next 2 membrane-spanning stretches (helical) occupy residues 575–596 (AFYLAVFWMLNTIGWVTFYWHW) and 643–665 (LSVWAWMFLFGHLIWATGFMFLI). Residues histidine 654, methionine 662, and tyrosine 670 each coordinate chlorophyll a. Phylloquinone is bound at residue tryptophan 671. The chain crosses the membrane as a helical span at residues 707–727 (LVGLSHFSVGYIFTYAAFLIA).

This sequence belongs to the PsaA/PsaB family. In terms of assembly, the PsaA/B heterodimer binds the P700 chlorophyll special pair and subsequent electron acceptors. PSI consists of a core antenna complex that captures photons, and an electron transfer chain that converts photonic excitation into a charge separation. The eukaryotic PSI reaction center is composed of at least 11 subunits. P700 is a chlorophyll a/chlorophyll a' dimer, A0 is one or more chlorophyll a, A1 is one or both phylloquinones and FX is a shared 4Fe-4S iron-sulfur center. is required as a cofactor.

It localises to the plastid. The protein localises to the chloroplast thylakoid membrane. It catalyses the reaction reduced [plastocyanin] + hnu + oxidized [2Fe-2S]-[ferredoxin] = oxidized [plastocyanin] + reduced [2Fe-2S]-[ferredoxin]. In terms of biological role, psaA and PsaB bind P700, the primary electron donor of photosystem I (PSI), as well as the electron acceptors A0, A1 and FX. PSI is a plastocyanin-ferredoxin oxidoreductase, converting photonic excitation into a charge separation, which transfers an electron from the donor P700 chlorophyll pair to the spectroscopically characterized acceptors A0, A1, FX, FA and FB in turn. Oxidized P700 is reduced on the lumenal side of the thylakoid membrane by plastocyanin. The polypeptide is Photosystem I P700 chlorophyll a apoprotein A2 (Chara vulgaris (Common stonewort)).